The chain runs to 244 residues: rRNA adenine N-6-methyltransferase (244 aa).

S-adenosyl-L-methionine is bound by residues Asn-11, Ile-13, Gly-38, Glu-59, Asp-84, and Asn-101.

Belongs to the class I-like SAM-binding methyltransferase superfamily. rRNA adenine N(6)-methyltransferase family.

The catalysed reaction is adenosine(2085) in 23S rRNA + 2 S-adenosyl-L-methionine = N(6)-dimethyladenosine(2085) in 23S rRNA + 2 S-adenosyl-L-homocysteine + 2 H(+). Its function is as follows. This protein produces a dimethylation of the adenine residue at position 2085 in 23S rRNA, resulting in reduced affinity between ribosomes and macrolide-lincosamide-streptogramin B antibiotics. Is involved in erythromycin resistance. This chain is rRNA adenine N-6-methyltransferase (ermGT), found in Limosilactobacillus reuteri (Lactobacillus reuteri).